The following is a 356-amino-acid chain: MSTVTITDLARENVRNLTPYQSARRLGGNGDVWLNANEYPTVVEFQLTQQTLNRYPECQPKAVIENYAQYAGVKPEQVLVSRGADEGIELLIRAFCEPGKDAILYCPPTYGMYSVSAETIGVECRTVPTLENWQLDLQGISDKLDGVKVVYVCSPNNPTGQLINPQDFRTLLELTRGKAIVVADEAYIEFCPQASLAGWLAEYPHLAILRTLSKAFALAGLRCGFTLANEEVINLLMKVIAPYPLSTPVADIAAQALSPQGIVAMRERVTQIIAEREYLIAALKEISCVEQVFDSETNYILARFKASSAVFKSLWDQGIILRDQNKQPSLSGCLRITVGTREESQRVIDALRAEQV.

Lys214 carries the post-translational modification N6-(pyridoxal phosphate)lysine.

This sequence belongs to the class-II pyridoxal-phosphate-dependent aminotransferase family. Histidinol-phosphate aminotransferase subfamily. Homodimer. The cofactor is pyridoxal 5'-phosphate.

The catalysed reaction is L-histidinol phosphate + 2-oxoglutarate = 3-(imidazol-4-yl)-2-oxopropyl phosphate + L-glutamate. It participates in amino-acid biosynthesis; L-histidine biosynthesis; L-histidine from 5-phospho-alpha-D-ribose 1-diphosphate: step 7/9. This Escherichia coli O81 (strain ED1a) protein is Histidinol-phosphate aminotransferase.